Consider the following 102-residue polypeptide: NADH-quinone oxidoreductase subunit K (102 aa).

A run of 3 helical transmembrane segments spans residues 5 to 25 (LGHY…GIFL), 31 to 51 (IVLL…FVAF), and 62 to 82 (VFVF…LAIL).

Belongs to the complex I subunit 4L family. As to quaternary structure, NDH-1 is composed of 14 different subunits. Subunits NuoA, H, J, K, L, M, N constitute the membrane sector of the complex.

Its subcellular location is the cell inner membrane. It catalyses the reaction a quinone + NADH + 5 H(+)(in) = a quinol + NAD(+) + 4 H(+)(out). Its function is as follows. NDH-1 shuttles electrons from NADH, via FMN and iron-sulfur (Fe-S) centers, to quinones in the respiratory chain. The immediate electron acceptor for the enzyme in this species is believed to be ubiquinone. Couples the redox reaction to proton translocation (for every two electrons transferred, four hydrogen ions are translocated across the cytoplasmic membrane), and thus conserves the redox energy in a proton gradient. This Methylibium petroleiphilum (strain ATCC BAA-1232 / LMG 22953 / PM1) protein is NADH-quinone oxidoreductase subunit K.